Reading from the N-terminus, the 262-residue chain is Ribosomal RNA small subunit methyltransferase A (262 aa).

6 residues coordinate S-adenosyl-L-methionine: Asn14, Leu16, Gly41, Glu62, Asp87, and Asn109.

Belongs to the class I-like SAM-binding methyltransferase superfamily. rRNA adenine N(6)-methyltransferase family. RsmA subfamily.

The protein resides in the cytoplasm. The catalysed reaction is adenosine(1518)/adenosine(1519) in 16S rRNA + 4 S-adenosyl-L-methionine = N(6)-dimethyladenosine(1518)/N(6)-dimethyladenosine(1519) in 16S rRNA + 4 S-adenosyl-L-homocysteine + 4 H(+). Functionally, specifically dimethylates two adjacent adenosines (A1518 and A1519) in the loop of a conserved hairpin near the 3'-end of 16S rRNA in the 30S particle. May play a critical role in biogenesis of 30S subunits. The chain is Ribosomal RNA small subunit methyltransferase A from Francisella tularensis subsp. novicida (strain U112).